The primary structure comprises 110 residues: Minor capsid protein VP2 (110 aa).

It belongs to the vesivirus VP2 protein family. As to quaternary structure, homooligomer. The portal-like structure consists in 12 copies of VP2. Interacts with capsid protein VP1.

The protein resides in the virion. It localises to the host cytoplasm. Its function is as follows. Minor structural protein that forms a portal-like structure at a unique three-fold axis of symmetry, following binding to the host receptor. The channel formed by VP2 may allow the delivery of the viral genome through the host endosomal membrane. The protein is Minor capsid protein VP2 of Vesicular exanthema of swine virus serotype A48 (isolate Swine/United States/A48/1948) (VESV).